The chain runs to 454 residues: tRNA modification GTPase MnmE (454 aa).

Residues R23, E80, and K120 each contribute to the (6S)-5-formyl-5,6,7,8-tetrahydrofolate site. One can recognise a TrmE-type G domain in the interval 216-377; it reads GMKVVIAGRP…LRNHLKQSMG (162 aa). N226 is a binding site for K(+). GTP is bound by residues 226–231, 245–251, 270–273, 335–338, and 358–360; these read NAGKSS, TDIAGTT, DTAG, NKAD, and SAR. Mg(2+) is bound at residue S230. Residues T245, I247, and T250 each contribute to the K(+) site. T251 is a Mg(2+) binding site. Position 454 (K454) interacts with (6S)-5-formyl-5,6,7,8-tetrahydrofolate.

This sequence belongs to the TRAFAC class TrmE-Era-EngA-EngB-Septin-like GTPase superfamily. TrmE GTPase family. As to quaternary structure, homodimer. Heterotetramer of two MnmE and two MnmG subunits. It depends on K(+) as a cofactor.

It localises to the cytoplasm. Functionally, exhibits a very high intrinsic GTPase hydrolysis rate. Involved in the addition of a carboxymethylaminomethyl (cmnm) group at the wobble position (U34) of certain tRNAs, forming tRNA-cmnm(5)s(2)U34. The sequence is that of tRNA modification GTPase MnmE from Escherichia coli O139:H28 (strain E24377A / ETEC).